A 145-amino-acid chain; its full sequence is D-aminoacyl-tRNA deacylase (145 aa).

A Gly-cisPro motif, important for rejection of L-amino acids motif is present at residues 137 to 138; that stretch reads GP.

This sequence belongs to the DTD family. Homodimer.

It is found in the cytoplasm. It carries out the reaction glycyl-tRNA(Ala) + H2O = tRNA(Ala) + glycine + H(+). The catalysed reaction is a D-aminoacyl-tRNA + H2O = a tRNA + a D-alpha-amino acid + H(+). An aminoacyl-tRNA editing enzyme that deacylates mischarged D-aminoacyl-tRNAs. Also deacylates mischarged glycyl-tRNA(Ala), protecting cells against glycine mischarging by AlaRS. Acts via tRNA-based rather than protein-based catalysis; rejects L-amino acids rather than detecting D-amino acids in the active site. By recycling D-aminoacyl-tRNA to D-amino acids and free tRNA molecules, this enzyme counteracts the toxicity associated with the formation of D-aminoacyl-tRNA entities in vivo and helps enforce protein L-homochirality. The protein is D-aminoacyl-tRNA deacylase of Limosilactobacillus reuteri (strain DSM 20016) (Lactobacillus reuteri).